The primary structure comprises 200 residues: Recombination protein RecR (200 aa).

The segment at 58–73 adopts a C4-type zinc-finger fold; that stretch reads CQVCGNMDTENICGIC. Residues 81–176 enclose the Toprim domain; sequence SVIAIVETVA…KISRLASGIP (96 aa).

This sequence belongs to the RecR family.

Its function is as follows. May play a role in DNA repair. It seems to be involved in an RecBC-independent recombinational process of DNA repair. It may act with RecF and RecO. The protein is Recombination protein RecR of Rickettsia bellii (strain OSU 85-389).